The primary structure comprises 380 residues: Ribosomal RNA large subunit methyltransferase F (380 aa).

Residues 1–32 form a disordered region; it reads MSHKTKPSTQERKAGKPSAPKRKVISKSPNSK.

It belongs to the methyltransferase superfamily. METTL16/RlmF family.

The protein resides in the cytoplasm. It carries out the reaction adenosine(1618) in 23S rRNA + S-adenosyl-L-methionine = N(6)-methyladenosine(1618) in 23S rRNA + S-adenosyl-L-homocysteine + H(+). In terms of biological role, specifically methylates the adenine in position 1618 of 23S rRNA. In Shewanella halifaxensis (strain HAW-EB4), this protein is Ribosomal RNA large subunit methyltransferase F.